The following is a 238-amino-acid chain: Adapter protein MecA (238 aa).

Basic and acidic residues predominate over residues 120–136; it reads QQQKDNKQNQDQNERNR. The tract at residues 120–139 is disordered; sequence QQQKDNKQNQDQNERNRQNT.

Belongs to the MecA family. Homodimer.

Enables the recognition and targeting of unfolded and aggregated proteins to the ClpC protease or to other proteins involved in proteolysis. The chain is Adapter protein MecA from Staphylococcus saprophyticus subsp. saprophyticus (strain ATCC 15305 / DSM 20229 / NCIMB 8711 / NCTC 7292 / S-41).